Consider the following 440-residue polypeptide: GTPase Der (440 aa).

EngA-type G domains lie at 3 to 167 and 176 to 351; these read PIIA…PYDR and TRIA…EQYC. GTP-binding positions include 9 to 16, 56 to 60, 119 to 122, 182 to 189, 229 to 233, and 294 to 297; these read GRPNVGKS, DTGGF, NKVD, DTAGI, and NKWD. The region spanning 352-436 is the KH-like domain; sequence KRVTTGELNR…PLKLIFRGRD (85 aa).

It belongs to the TRAFAC class TrmE-Era-EngA-EngB-Septin-like GTPase superfamily. EngA (Der) GTPase family. As to quaternary structure, associates with the 50S ribosomal subunit.

Its function is as follows. GTPase that plays an essential role in the late steps of ribosome biogenesis. The protein is GTPase Der of Geobacter sp. (strain M21).